Consider the following 288-residue polypeptide: 2-hydroxy-6-oxononadienedioate/2-hydroxy-6-oxononatrienedioate hydrolase (288 aa).

H267 (proton acceptor) is an active-site residue.

Belongs to the AB hydrolase superfamily. MhpC family. Homodimer.

The enzyme catalyses (2Z,4E)-2-hydroxy-6-oxonona-2,4-dienedioate + H2O = (2Z)-2-hydroxypenta-2,4-dienoate + succinate + H(+). It carries out the reaction (2Z,4E,7E)-2-hydroxy-6-oxonona-2,4,7-trienedioate + H2O = (2Z)-2-hydroxypenta-2,4-dienoate + fumarate + H(+). It functions in the pathway aromatic compound metabolism; 3-phenylpropanoate degradation. Its function is as follows. Catalyzes the cleavage of the C5-C6 bond of 2-hydroxy-6-oxononadienedioate and 2-hydroxy-6-oxononatrienedioate, a dienol ring fission product of the bacterial meta-cleavage pathway for degradation of phenylpropionic acid. The polypeptide is 2-hydroxy-6-oxononadienedioate/2-hydroxy-6-oxononatrienedioate hydrolase (Klebsiella pneumoniae subsp. pneumoniae (strain ATCC 700721 / MGH 78578)).